Here is a 375-residue protein sequence, read N- to C-terminus: Xylose transport system permease protein XylH (375 aa).

Helical transmembrane passes span 9-29 (LQVY…SVAT), 52-72 (LAIG…VGSL), 85-105 (VWWG…GLIF), 118-138 (VPSF…LIGL), 159-179 (LSDI…VLWG), 199-219 (DFTK…LLND), 220-240 (YRGI…GLFL), 271-291 (KLII…ILSA), 319-339 (LAGG…IASL), and 348-368 (VPTF…VWID).

Belongs to the binding-protein-dependent transport system permease family. AraH/RbsC subfamily.

It localises to the cell inner membrane. Its function is as follows. Part of the binding-protein-dependent transport system for D-xylose. Probably responsible for the translocation of the substrate across the membrane. The protein is Xylose transport system permease protein XylH (xylH) of Haemophilus influenzae (strain ATCC 51907 / DSM 11121 / KW20 / Rd).